A 221-amino-acid polypeptide reads, in one-letter code: Queuosine precursor transporter (221 aa).

The Cytoplasmic segment spans residues 1 to 12; sequence MNVFSQTQRYKA. The chain crosses the membrane as a helical span at residues 13-33; the sequence is LFWLSLFHLLVITSSNYLVQL. A topological domain (periplasmic) is located at residue P34. A helical transmembrane segment spans residues 35–55; sequence VSILGFHTTWGAFSFPFIFLA. Over 56-70 the chain is Cytoplasmic; it reads TDLTVRIFGAPLARR. A helical transmembrane segment spans residues 71-91; it reads IIFAVMIPALLISYVISSLFY. The Periplasmic portion of the chain corresponds to 92-97; sequence MGSWQG. Residues 98–118 traverse the membrane as a helical segment; it reads FGALAHFNLFVARIATASFMA. Over 119 to 143 the chain is Cytoplasmic; it reads YALGQILDVHVFNRLRQSRRWWLAP. Residues 144–164 traverse the membrane as a helical segment; that stretch reads TASTLFGNVSDTLAFFFIAFW. Residues 165-184 lie on the Periplasmic side of the membrane; sequence RSPDAFMAEHWMEIALVDYC. The helical transmembrane segment at 185–205 threads the bilayer; it reads FKVLISIVFFLPMYGVLLNML. Topologically, residues 206-221 are cytoplasmic; it reads LKRLADKSEINALQAS.

This sequence belongs to the vitamin uptake transporter (VUT/ECF) (TC 2.A.88) family. Q precursor transporter subfamily.

Its subcellular location is the cell inner membrane. Its function is as follows. Involved in the import of queuosine (Q) precursors, required for Q precursor salvage. Transports 7-cyano-7-deazaguanine (preQ(0)) and 7-aminomethyl-7-deazaguanine (preQ(1)), with a preference for preQ(0). The protein is Queuosine precursor transporter (yhhQ) of Escherichia coli (strain K12).